The primary structure comprises 224 residues: UPF0758 protein VFMJ11_0123 (224 aa).

The 123-residue stretch at 102-224 (ALTSPEHTKR…IVSFAERGWI (123 aa)) folds into the MPN domain. Zn(2+)-binding residues include histidine 173, histidine 175, and aspartate 186. A JAMM motif motif is present at residues 173-186 (HNHPSGVAEPSQAD).

The protein belongs to the UPF0758 family.

This is UPF0758 protein VFMJ11_0123 from Aliivibrio fischeri (strain MJ11) (Vibrio fischeri).